The following is a 121-amino-acid chain: uncharacterized protein (121 aa).

A helical membrane pass occupies residues 6–26; it reads ITTASILLVVIVAFCAAAPMI.

It is found in the membrane. This is an uncharacterized protein from Caenorhabditis elegans.